The following is a 190-amino-acid chain: Embryo-specific protein ATS3B (190 aa).

Positions 1 to 24 (MASVRLFFTLISFVFIISTSVYES) are cleaved as a signal peptide. Asparagine 37 carries N-linked (GlcNAc...) asparagine glycosylation. Residues 48–158 (CAYTVIISTS…ESVWYGFNYC (111 aa)) enclose the PLAT domain.

As to quaternary structure, interacts with EULS3 (via N-terminus). In terms of tissue distribution, expressed in roots, rosette leaves, stems, cauline leaves and flowers.

It localises to the secreted. In terms of biological role, may play a role during embryo development. This is Embryo-specific protein ATS3B from Arabidopsis thaliana (Mouse-ear cress).